The primary structure comprises 387 residues: Protein RecA (387 aa).

Residue 78-85 (GPESSGKT) coordinates ATP. Over residues 350 to 369 (QTREVKSIERDPKETKETKS) the composition is skewed to basic and acidic residues. Residues 350–387 (QTREVKSIERDPKETKETKSKQPVSFSTEAEVDIAVGE) form a disordered region.

The protein belongs to the RecA family.

The protein localises to the cytoplasm. In terms of biological role, can catalyze the hydrolysis of ATP in the presence of single-stranded DNA, the ATP-dependent uptake of single-stranded DNA by duplex DNA, and the ATP-dependent hybridization of homologous single-stranded DNAs. It interacts with LexA causing its activation and leading to its autocatalytic cleavage. The chain is Protein RecA from Leptospira meyeri.